We begin with the raw amino-acid sequence, 324 residues long: 33 kDa ribonucleoprotein, chloroplastic (324 aa).

Residues 1–71 (MSGCCFSFAA…YRSSIFLSTC (71 aa)) constitute a chloroplast transit peptide. RRM domains lie at 114–192 (GRLY…FPEV) and 217–296 (HKLY…AGQK). The tract at residues 294–324 (GQKAPVSSPPVVETSPENDSDNSELLSSLSS) is disordered. The span at 298–308 (PVSSPPVVETS) shows a compositional bias: low complexity.

The protein resides in the plastid. The protein localises to the chloroplast. Could be involved in splicing and/or processing of chloroplast RNA's. This is 33 kDa ribonucleoprotein, chloroplastic from Nicotiana sylvestris (Wood tobacco).